The chain runs to 226 residues: MESYKSEFIDFMVESDVLKFGDFTLKSGRKSPFFMNAGAYVTGSQLKRLGEYYAKAIHANYGDDFDVLFGPAYKGIPLAVVTAIAYHELYGKEVRYCSDRKEAKDHGADKGGFLGSKLKDGDRVVMIEDVTTSGKSMEETVPKVRGAADVTIVGLMVSLNRMEVGQGGKVSALDEIHEKYGFEGKAIVTMEEVTEYLYNREHDGRVVIDDTIKAAIDEYYKQYGCK.

Residues Lys26, 73–74 (YK), Arg100, Lys101, Lys104, His106, and 128–136 (EDVTTSGKS) contribute to the 5-phospho-alpha-D-ribose 1-diphosphate site. The orotate site is built by Thr132 and Arg161.

It belongs to the purine/pyrimidine phosphoribosyltransferase family. PyrE subfamily. In terms of assembly, homodimer. It depends on Mg(2+) as a cofactor.

The catalysed reaction is orotidine 5'-phosphate + diphosphate = orotate + 5-phospho-alpha-D-ribose 1-diphosphate. Its pathway is pyrimidine metabolism; UMP biosynthesis via de novo pathway; UMP from orotate: step 1/2. Functionally, catalyzes the transfer of a ribosyl phosphate group from 5-phosphoribose 1-diphosphate to orotate, leading to the formation of orotidine monophosphate (OMP). The protein is Orotate phosphoribosyltransferase of Agathobacter rectalis (strain ATCC 33656 / DSM 3377 / JCM 17463 / KCTC 5835 / VPI 0990) (Eubacterium rectale).